The chain runs to 177 residues: Ribosome maturation factor RimP (177 aa).

Over residues Val-153–Lys-171 the composition is skewed to basic and acidic residues. Residues Val-153–Ala-177 form a disordered region.

Belongs to the RimP family.

The protein localises to the cytoplasm. Required for maturation of 30S ribosomal subunits. The protein is Ribosome maturation factor RimP of Streptomyces coelicolor (strain ATCC BAA-471 / A3(2) / M145).